A 632-amino-acid polypeptide reads, in one-letter code: ATP-dependent zinc metalloprotease FtsH (632 aa).

Residues 1–9 (MKPTNEPKK) lie on the Cytoplasmic side of the membrane. The chain crosses the membrane as a helical span at residues 10–30 (PFFQSPIVLAVLGGILLIFFL). Over 31–116 (RSFNSDGSFS…INYSGFSESN (86 aa)) the chain is Periplasmic. The helical transmembrane segment at 117–137 (FFTDMLGWLMPILVILGLWMF) threads the bilayer. Residues 138-632 (MANRMQKNMG…RLIPLEEQAS (495 aa)) are Cytoplasmic-facing. Residue 210 to 217 (GPPGTGKT) participates in ATP binding. His-434 contacts Zn(2+). Glu-435 is a catalytic residue. Residues His-438 and Asp-511 each coordinate Zn(2+).

This sequence in the central section; belongs to the AAA ATPase family. It in the C-terminal section; belongs to the peptidase M41 family. As to quaternary structure, homohexamer. Zn(2+) serves as cofactor.

It is found in the cell inner membrane. Acts as a processive, ATP-dependent zinc metallopeptidase for both cytoplasmic and membrane proteins. Plays a role in the quality control of integral membrane proteins. This Helicobacter pylori (strain J99 / ATCC 700824) (Campylobacter pylori J99) protein is ATP-dependent zinc metalloprotease FtsH.